Consider the following 535-residue polypeptide: T-complex protein 1 subunit epsilon (535 aa).

Belongs to the TCP-1 chaperonin family. In terms of assembly, heterooligomeric complex of about 850 to 900 kDa that forms two stacked rings, 12 to 16 nm in diameter.

The protein localises to the cytoplasm. Its function is as follows. Molecular chaperone; assists the folding of proteins upon ATP hydrolysis. Known to play a role, in vitro, in the folding of actin and tubulin. The sequence is that of T-complex protein 1 subunit epsilon from Avena sativa (Oat).